The following is a 339-amino-acid chain: DNA-directed RNA polymerase subunit alpha (339 aa).

The interval M1–E233 is alpha N-terminal domain (alpha-NTD). Residues K264 to F339 form an alpha C-terminal domain (alpha-CTD) region.

It belongs to the RNA polymerase alpha chain family. As to quaternary structure, in plastids the minimal PEP RNA polymerase catalytic core is composed of four subunits: alpha, beta, beta', and beta''. When a (nuclear-encoded) sigma factor is associated with the core the holoenzyme is formed, which can initiate transcription.

The protein localises to the plastid. The protein resides in the chloroplast. It catalyses the reaction RNA(n) + a ribonucleoside 5'-triphosphate = RNA(n+1) + diphosphate. In terms of biological role, DNA-dependent RNA polymerase catalyzes the transcription of DNA into RNA using the four ribonucleoside triphosphates as substrates. The chain is DNA-directed RNA polymerase subunit alpha from Elymus californicus (California bottlebrush grass).